Here is a 151-residue protein sequence, read N- to C-terminus: 1,4-dihydroxy-2-naphthoyl-CoA hydrolase (151 aa).

Residue aspartate 23 is part of the active site.

It belongs to the 4-hydroxybenzoyl-CoA thioesterase family. DHNA-CoA hydrolase subfamily.

The catalysed reaction is 1,4-dihydroxy-2-naphthoyl-CoA + H2O = 1,4-dihydroxy-2-naphthoate + CoA + H(+). Its pathway is cofactor biosynthesis; phylloquinone biosynthesis. It functions in the pathway quinol/quinone metabolism; 1,4-dihydroxy-2-naphthoate biosynthesis; 1,4-dihydroxy-2-naphthoate from chorismate: step 7/7. Catalyzes the hydrolysis of 1,4-dihydroxy-2-naphthoyl-CoA (DHNA-CoA) to 1,4-dihydroxy-2-naphthoate (DHNA), a reaction involved in phylloquinone (vitamin K1) biosynthesis. This chain is 1,4-dihydroxy-2-naphthoyl-CoA hydrolase, found in Prochlorococcus marinus (strain MIT 9211).